The sequence spans 321 residues: tRNA-dihydrouridine synthase B (321 aa).

Residues P16–A18 and Q70 contribute to the FMN site. C100 functions as the Proton donor in the catalytic mechanism. FMN is bound by residues K139, N200–D202, and G224–R225.

This sequence belongs to the Dus family. DusB subfamily. It depends on FMN as a cofactor.

It catalyses the reaction a 5,6-dihydrouridine in tRNA + NAD(+) = a uridine in tRNA + NADH + H(+). The enzyme catalyses a 5,6-dihydrouridine in tRNA + NADP(+) = a uridine in tRNA + NADPH + H(+). Functionally, catalyzes the synthesis of 5,6-dihydrouridine (D), a modified base found in the D-loop of most tRNAs, via the reduction of the C5-C6 double bond in target uridines. In Salmonella typhi, this protein is tRNA-dihydrouridine synthase B.